A 566-amino-acid chain; its full sequence is MKKDYKKVFLKNTKEERIKENSNYLRGTIIDDLKDEITNGFTGDNFSLIRFHGMYQDDRDLRLERNEQKLEPRYAMMLRCRLPRGIIKAKKWLKIDHFASKNTLYGTIRLNNLQTFQFHGILKKTLKDAHKMLNKIGLDSLGTANDVNRNVLCTSNPMESLIHQQCYEWVSKISNFLLPQTKAYAEIWLNQKKIATTDQEPILGKTYLPRKFKTTVVVPPYNDVDLYANDMNFIAITKNNKIVGFNVLIGGGLSINHGNKNTWPFLAVELGYITLEKTLSVAESIVTTQRDWGNRTDRKNAKTRYTIAKVGLSVFKKEVEKRANMTFETIKPYYFISRGDRFGWTKNINNDWSLTVFIQNGRIYDNDKQLVKSGLLKIANLHTGNFRLTANQNIVISEILDKNKKKIEEIAISHGLIKKVSSLRENSMACVSFPTCPLAIAESERILSFFITKVENIMLKYGIEKEIIILRISGCPNGCGRSLLAEIGLIGKSLGRYNLYIGGNRIGSRIPKIYKENITEQEILIHLDFLIKIWSIERQKKEHFGDFVIRRNVVKKVVNPIYDFWN.

4 residues coordinate [4Fe-4S] cluster: cysteine 430, cysteine 436, cysteine 475, and cysteine 479. Position 479 (cysteine 479) interacts with siroheme.

Belongs to the nitrite and sulfite reductase 4Fe-4S domain family. In terms of assembly, alpha(8)-beta(8). The alpha component is a flavoprotein, the beta component is a hemoprotein. It depends on siroheme as a cofactor. Requires [4Fe-4S] cluster as cofactor.

The catalysed reaction is hydrogen sulfide + 3 NADP(+) + 3 H2O = sulfite + 3 NADPH + 4 H(+). It functions in the pathway sulfur metabolism; hydrogen sulfide biosynthesis; hydrogen sulfide from sulfite (NADPH route): step 1/1. Component of the sulfite reductase complex that catalyzes the 6-electron reduction of sulfite to sulfide. This is one of several activities required for the biosynthesis of L-cysteine from sulfate. This Buchnera aphidicola subsp. Schizaphis graminum (strain Sg) protein is Putative sulfite reductase [NADPH] hemoprotein beta-component.